Consider the following 289-residue polypeptide: MSLFNTENTWAFVFGLLGNLISFAVFLSPVPTFYRIWKKKTTEGFQSIPYVVALFSATLWLYYATQKKDVFLLVTINAFGCFIETIYISMFLAYAPKPARMLTVKMLLLMNFGGFCAILLLCQFLVKGATRAKIIGGICVGFSVCVFAAPLSIIRTVIKTRSVEYMPFSLSLTLTISAVIWLLYGLALKDIYVAFPNVLGFALGALQMILYVVYKYCKTSPHLGEKEVEAAKLPEVSLDMLKLGTVSSPEPISVVRQANKCTCGNDRRAEIEDGQTPKHGKQSSSAAAT.

At 1 to 9 (MSLFNTENT) the chain is on the extracellular side. Residues 10–30 (WAFVFGLLGNLISFAVFLSPV) form a helical membrane-spanning segment. Residues 12 to 98 (FVFGLLGNLI…SMFLAYAPKP (87 aa)) enclose the MtN3/slv 1 domain. The Cytoplasmic portion of the chain corresponds to 31–43 (PTFYRIWKKKTTE). A helical membrane pass occupies residues 44–64 (GFQSIPYVVALFSATLWLYYA). At 65–70 (TQKKDV) the chain is on the extracellular side. A helical transmembrane segment spans residues 71–91 (FLLVTINAFGCFIETIYISMF). Residues 92 to 105 (LAYAPKPARMLTVK) are Cytoplasmic-facing. Residues 106 to 126 (MLLLMNFGGFCAILLLCQFLV) traverse the membrane as a helical segment. Topologically, residues 127-133 (KGATRAK) are extracellular. Residues 134–154 (IIGGICVGFSVCVFAAPLSII) form a helical membrane-spanning segment. Residues 134-218 (IIGGICVGFS…ILYVVYKYCK (85 aa)) enclose the MtN3/slv 2 domain. Residues 155–167 (RTVIKTRSVEYMP) lie on the Cytoplasmic side of the membrane. A helical membrane pass occupies residues 168–188 (FSLSLTLTISAVIWLLYGLAL). Residues 189 to 192 (KDIY) lie on the Extracellular side of the membrane. A helical transmembrane segment spans residues 193–213 (VAFPNVLGFALGALQMILYVV). Residues 214–289 (YKYCKTSPHL…GKQSSSAAAT (76 aa)) are Cytoplasmic-facing. The segment at 266-289 (DRRAEIEDGQTPKHGKQSSSAAAT) is disordered. T276 is modified (phosphothreonine).

The protein belongs to the SWEET sugar transporter family. In terms of assembly, forms homooligomers and heterooligomers with SWEET1, SWEET3, SWEET5, SWEET6, SWEET7, SWEET8, SWEET9, SWEET12, SWEET13, SWEET15 and SWEET17. As to expression, expressed in leaves, especially in phloem. Expressed in developing seeds.

The protein localises to the cell membrane. Mediates both low-affinity uptake and efflux of sugar across the plasma membrane. Involved in phloem loading by mediating export from parenchyma cells feeding H(+)-coupled import into the sieve element/companion cell complex, thus contributing to the sucrose migration from sites of synthesis in the mesophyll to the phloem. Contributes to seed filling by triggering sucrose efflux involved in the transfer of sugars from seed coat to embryos. The protein is Bidirectional sugar transporter SWEET11 of Arabidopsis thaliana (Mouse-ear cress).